A 449-amino-acid polypeptide reads, in one-letter code: Exodeoxyribonuclease 7 large subunit (449 aa).

It belongs to the XseA family. Heterooligomer composed of large and small subunits.

It localises to the cytoplasm. It catalyses the reaction Exonucleolytic cleavage in either 5'- to 3'- or 3'- to 5'-direction to yield nucleoside 5'-phosphates.. Its function is as follows. Bidirectionally degrades single-stranded DNA into large acid-insoluble oligonucleotides, which are then degraded further into small acid-soluble oligonucleotides. The protein is Exodeoxyribonuclease 7 large subunit of Salmonella typhimurium (strain LT2 / SGSC1412 / ATCC 700720).